The chain runs to 263 residues: Small ribosomal subunit protein eS4 (263 aa).

Residues 42–104 (LPLVIFLRNR…TNELFRLIYD (63 aa)) enclose the S4 RNA-binding domain.

The protein belongs to the eukaryotic ribosomal protein eS4 family.

The chain is Small ribosomal subunit protein eS4 (RpS4) from Bombyx mori (Silk moth).